The chain runs to 117 residues: Large ribosomal subunit protein uL18 (117 aa).

The protein belongs to the universal ribosomal protein uL18 family. As to quaternary structure, part of the 50S ribosomal subunit; part of the 5S rRNA/L5/L18/L25 subcomplex. Contacts the 5S and 23S rRNAs.

This is one of the proteins that bind and probably mediate the attachment of the 5S RNA into the large ribosomal subunit, where it forms part of the central protuberance. This chain is Large ribosomal subunit protein uL18, found in Tolumonas auensis (strain DSM 9187 / NBRC 110442 / TA 4).